The sequence spans 351 residues: Very-long-chain 3-oxoacyl-CoA reductase (351 aa).

The chain crosses the membrane as a helical span at residues 26 to 46 (LLWCAFTVGAVKLTTFMLSLI). The NADP(+) site is built by Leu72, Asp126, Asn153, Tyr225, Lys229, Val258, and Ser260. Residue Tyr225 is the Proton donor of the active site. Catalysis depends on Lys229, which acts as the Lowers pKa of active site Tyr.

Belongs to the short-chain dehydrogenases/reductases (SDR) family.

The protein resides in the endoplasmic reticulum membrane. The catalysed reaction is a very-long-chain (3R)-3-hydroxyacyl-CoA + NADP(+) = a very-long-chain 3-oxoacyl-CoA + NADPH + H(+). It participates in lipid metabolism; fatty acid biosynthesis. In terms of biological role, component of the microsomal membrane bound fatty acid elongation system, which produces the 26-carbon very long-chain fatty acids (VLCFA) from palmitate. Catalyzes the reduction of the 3-ketoacyl-CoA intermediate that is formed in each cycle of fatty acid elongation. VLCFAs serve as precursors for ceramide and sphingolipids. The sequence is that of Very-long-chain 3-oxoacyl-CoA reductase from Eremothecium gossypii (strain ATCC 10895 / CBS 109.51 / FGSC 9923 / NRRL Y-1056) (Yeast).